The sequence spans 427 residues: Isoprenylcysteine alpha-carbonyl methylesterase ICME (427 aa).

A disordered region spans residues 26–59 (EVLPDEDSDRTTLLNGEPLRRRVSGKSPVDEGPR). 2 helical membrane passes run 102-122 (LLALTCYAMLLMPGFLQVAYS) and 157-177 (VVVFVTGGAWIIGYKAWGSLL). Substrate-binding positions include 163–165 (GGA) and 234–236 (QSA). Catalysis depends on residues Ser235, Asp336, and His368.

The protein belongs to the AB hydrolase superfamily. Isoprenylcysteine methylesterase family. Expressed in roots, rosette and cauline leaves, stems, flowers and siliques.

Its subcellular location is the endoplasmic reticulum membrane. The protein resides in the golgi apparatus membrane. The catalysed reaction is [protein]-C-terminal S-[(2E,6E)-farnesyl]-L-cysteine methyl ester + H2O = [protein]-C-terminal S-[(2E,6E)-farnesyl]-L-cysteine + methanol + H(+). In terms of biological role, catalyzes the demethylation of isoprenylcysteine methylesters. In vitro, is specific for N-acetyl-S-farnesyl-L-cysteine methyl ester (AFCme) and has low activity toward N-acetyl-S-geranyl-L-cysteine methyl ester (AGCme). Acts as a positive regulator of ABA signaling. May be involved in the demethylation and inactivation of isoprenylated negative regulators of abscisic acid (ABA) signaling. Carboxyl methylation is a reversible and potentially regulated step in the post-translational modification of prenylated proteins. This Arabidopsis thaliana (Mouse-ear cress) protein is Isoprenylcysteine alpha-carbonyl methylesterase ICME.